The chain runs to 137 residues: Holo-[acyl-carrier-protein] synthase (137 aa).

Mg(2+) contacts are provided by D8 and E58.

This sequence belongs to the P-Pant transferase superfamily. AcpS family. It depends on Mg(2+) as a cofactor.

It is found in the cytoplasm. It catalyses the reaction apo-[ACP] + CoA = holo-[ACP] + adenosine 3',5'-bisphosphate + H(+). Its function is as follows. Transfers the 4'-phosphopantetheine moiety from coenzyme A to a Ser of acyl-carrier-protein. This Lactobacillus delbrueckii subsp. bulgaricus (strain ATCC 11842 / DSM 20081 / BCRC 10696 / JCM 1002 / NBRC 13953 / NCIMB 11778 / NCTC 12712 / WDCM 00102 / Lb 14) protein is Holo-[acyl-carrier-protein] synthase.